A 290-amino-acid chain; its full sequence is uncharacterized protein (290 aa).

5 helical membrane passes run 10–27 (FFVA…LLLI), 32–54 (VNYI…YFFS), 69–91 (ILVP…GVLI), 100–117 (VLAG…FFYF), and 121–143 (YLLM…NFEY). Positions 147–183 (VGKERKRILKLKKNYHKLLKEFSNFEREKRMFSNLRK) form a coiled coil.

The protein localises to the cell membrane. This is an uncharacterized protein from Aquifex aeolicus (strain VF5).